Here is a 76-residue protein sequence, read N- to C-terminus: RNA-binding protein KhpA (76 aa).

The region spanning 29–76 (SLTYKLSVSKEDMGRVIGKQGRIAKAIRTLVYAVGSKNDKKIRLEIIE) is the KH domain.

This sequence belongs to the KhpA RNA-binding protein family. Forms a complex with KhpB.

Its subcellular location is the cytoplasm. In terms of biological role, a probable RNA chaperone. Forms a complex with KhpB which binds to cellular RNA and controls its expression. Plays a role in peptidoglycan (PG) homeostasis and cell length regulation. The chain is RNA-binding protein KhpA from Listeria innocua serovar 6a (strain ATCC BAA-680 / CLIP 11262).